Here is a 119-residue protein sequence, read N- to C-terminus: 5-hydroxyisourate hydrolase (119 aa).

Substrate contacts are provided by His10, Arg48, and Tyr116.

This sequence belongs to the transthyretin family. 5-hydroxyisourate hydrolase subfamily. Homotetramer.

The enzyme catalyses 5-hydroxyisourate + H2O = 5-hydroxy-2-oxo-4-ureido-2,5-dihydro-1H-imidazole-5-carboxylate + H(+). Its pathway is purine metabolism; urate degradation; (S)-allantoin from urate: step 2/3. Catalyzes the hydrolysis of 5-hydroxyisourate (HIU) to 2-oxo-4-hydroxy-4-carboxy-5-ureidoimidazoline (OHCU). The sequence is that of 5-hydroxyisourate hydrolase from Deinococcus radiodurans (strain ATCC 13939 / DSM 20539 / JCM 16871 / CCUG 27074 / LMG 4051 / NBRC 15346 / NCIMB 9279 / VKM B-1422 / R1).